We begin with the raw amino-acid sequence, 404 residues long: Tryptophan synthase beta chain (404 aa).

K98 is modified (N6-(pyridoxal phosphate)lysine).

It belongs to the TrpB family. As to quaternary structure, tetramer of two alpha and two beta chains. Pyridoxal 5'-phosphate serves as cofactor.

The catalysed reaction is (1S,2R)-1-C-(indol-3-yl)glycerol 3-phosphate + L-serine = D-glyceraldehyde 3-phosphate + L-tryptophan + H2O. It participates in amino-acid biosynthesis; L-tryptophan biosynthesis; L-tryptophan from chorismate: step 5/5. Functionally, the beta subunit is responsible for the synthesis of L-tryptophan from indole and L-serine. This is Tryptophan synthase beta chain from Rhodopseudomonas palustris (strain BisA53).